A 107-amino-acid polypeptide reads, in one-letter code: CRISPR-associated endoribonuclease Cas2 (107 aa).

Asp6 is a binding site for Mg(2+).

The protein belongs to the CRISPR-associated endoribonuclease Cas2 protein family. As to quaternary structure, homodimer, forms a heterotetramer with a Cas1 homodimer. Requires Mg(2+) as cofactor.

Functionally, CRISPR (clustered regularly interspaced short palindromic repeat), is an adaptive immune system that provides protection against mobile genetic elements (viruses, transposable elements and conjugative plasmids). CRISPR clusters contain sequences complementary to antecedent mobile elements and target invading nucleic acids. CRISPR clusters are transcribed and processed into CRISPR RNA (crRNA). Functions as a ssRNA-specific endoribonuclease. Involved in the integration of spacer DNA into the CRISPR cassette. The polypeptide is CRISPR-associated endoribonuclease Cas2 (Streptococcus mutans serotype c (strain NN2025)).